We begin with the raw amino-acid sequence, 211 residues long: Large ribosomal subunit protein uL3 (211 aa).

The tract at residues 122 to 157 (NQKRNNFGRGPMSHGSKNHRAPGSIGAGTTPGRVYP) is disordered.

This sequence belongs to the universal ribosomal protein uL3 family. In terms of assembly, part of the 50S ribosomal subunit. Forms a cluster with proteins L14 and L19.

In terms of biological role, one of the primary rRNA binding proteins, it binds directly near the 3'-end of the 23S rRNA, where it nucleates assembly of the 50S subunit. The sequence is that of Large ribosomal subunit protein uL3 from Trichormus variabilis (strain ATCC 29413 / PCC 7937) (Anabaena variabilis).